A 303-amino-acid polypeptide reads, in one-letter code: Counting factor 50 (303 aa).

An N-terminal signal peptide occupies residues 1-24 (MNKMNNIFLIISSIILSIVIFVSG). Residues 28-240 (IDFSSEISVG…CSTSSGSASG (213 aa)) form the Ch-type lysozyme domain. Asn-67 is a glycosylation site (N-linked (GlcNAc...) asparagine). Glu-125 is an active-site residue. Asn-170 carries an N-linked (GlcNAc...) asparagine glycan. An S-G-S motif repeats region spans residues 226 to 303 (GSGSGCSTSS…GSGTGSGSSI (78 aa)). Low complexity predominate over residues 236–292 (GSASGSASGSASGSASGSNSGSSNSGSSNSGSSNSGSNSGSSNSGSGNSGSSNSGSA). Residues 236 to 303 (GSASGSASGS…GSGTGSGSSI (68 aa)) are disordered. Positions 293-303 (SGSGTGSGSSI) are enriched in gly residues.

This sequence belongs to the glycosyl hydrolase 25 family. Monomer. Component of the counting factor (CF) complex, which includes cf60, cf50, cf45-1 and ctnA.

It localises to the secreted. It catalyses the reaction Hydrolysis of (1-&gt;4)-beta-linkages between N-acetylmuramic acid and N-acetyl-D-glucosamine residues in a peptidoglycan and between N-acetyl-D-glucosamine residues in chitodextrins.. Its function is as follows. Cell-counting factor that limits the maximum size of the multicellular structure during aggregation. Has a very low lysozyme activity. This is Counting factor 50 (cf50-1) from Dictyostelium discoideum (Social amoeba).